We begin with the raw amino-acid sequence, 117 residues long: Dolichyl-diphosphooligosaccharide--protein glycosyltransferase subunit DAD1 (117 aa).

Residues 1–33 are Cytoplasmic-facing; that stretch reads MAKTSSTTKDAQDLFHAIWSAYSATPTNLKIID. A helical transmembrane segment spans residues 34-54; it reads LYVVFAVFTALLQDVYMALVG. Topologically, residues 55–57 are lumenal; sequence PFP. Residues 58–78 form a helical membrane-spanning segment; the sequence is FNSFLSGVLSCVGTAVLAVCL. At 79 to 96 the chain is on the cytoplasmic side; that stretch reads RIQVNKENKEFKDLGPER. A helical membrane pass occupies residues 97-117; the sequence is AFADFVLCNLVLHLVIMNFLG.

This sequence belongs to the DAD/OST2 family. As to quaternary structure, component of the oligosaccharyltransferase (OST) complex.

Its subcellular location is the endoplasmic reticulum membrane. The protein operates within protein modification; protein glycosylation. In terms of biological role, subunit of the oligosaccharyl transferase (OST) complex that catalyzes the initial transfer of a defined glycan (Glc(3)Man(9)GlcNAc(2) in eukaryotes) from the lipid carrier dolichol-pyrophosphate to an asparagine residue within an Asn-X-Ser/Thr consensus motif in nascent polypeptide chains, the first step in protein N-glycosylation. N-glycosylation occurs cotranslationally and the complex associates with the Sec61 complex at the channel-forming translocon complex that mediates protein translocation across the endoplasmic reticulum (ER). All subunits are required for a maximal enzyme activity. This is Dolichyl-diphosphooligosaccharide--protein glycosyltransferase subunit DAD1 (DAD1) from Pisum sativum (Garden pea).